A 237-amino-acid chain; its full sequence is Mediator of RNA polymerase II transcription subunit 20 (237 aa).

It belongs to the Mediator complex subunit 20 family. As to quaternary structure, component of the Mediator complex.

The protein localises to the nucleus. Functionally, component of the Mediator complex, a coactivator involved in the regulated transcription of nearly all RNA polymerase II-dependent genes. Mediator functions as a bridge to convey information from gene-specific regulatory proteins to the basal RNA polymerase II transcription machinery. Mediator is recruited to promoters by direct interactions with regulatory proteins and serves as a scaffold for the assembly of a functional preinitiation complex with RNA polymerase II and the general transcription factors. This Scheffersomyces stipitis (strain ATCC 58785 / CBS 6054 / NBRC 10063 / NRRL Y-11545) (Yeast) protein is Mediator of RNA polymerase II transcription subunit 20 (SRB2).